We begin with the raw amino-acid sequence, 329 residues long: Protein mlo2 (329 aa).

The UBR-type zinc-finger motif lies at 33–104; sequence DTCTYSMGYL…HSIPCNLRKS (72 aa). A PHD-type zinc finger spans residues 120–179; sequence GRFCICDTVYNPETEEGTMFQCILCEDWFHEKCLQKTNKGIAIPDAETFEWLVCSECSEK.

This sequence belongs to the UBR7 family.

Not known, interfere with mitotic chromosome segregation when overexpressed. This Schizosaccharomyces pombe (strain 972 / ATCC 24843) (Fission yeast) protein is Protein mlo2 (mlo2).